The sequence spans 589 residues: V-type ATP synthase alpha chain (589 aa).

239–246 provides a ligand contact to ATP; that stretch reads GPFGAGKT.

Belongs to the ATPase alpha/beta chains family.

The catalysed reaction is ATP + H2O + 4 H(+)(in) = ADP + phosphate + 5 H(+)(out). In terms of biological role, produces ATP from ADP in the presence of a proton gradient across the membrane. The V-type alpha chain is a catalytic subunit. In Treponema denticola (strain ATCC 35405 / DSM 14222 / CIP 103919 / JCM 8153 / KCTC 15104), this protein is V-type ATP synthase alpha chain.